The primary structure comprises 1223 residues: Rho family-interacting cell polarization regulator 1 (1223 aa).

Serine 22 carries the phosphoserine modification. Residues 83 to 112 are a coiled coil; that stretch reads RGLTAYLEVHQQEQEKLQRQIKESKRNSRL. Phosphoserine occurs at positions 345 and 347. Threonine 351 is modified (phosphothreonine). A disordered region spans residues 371-411; it reads NGTAWSLSSESSDDSSSPQLSGTARHSTPKPLVQQPEPLPV. Low complexity-rich tracts occupy residues 376-391 and 399-411; these read SLSS…PQLS and PKPL…PLPV. Phosphoserine is present on residues serine 451, serine 454, and serine 468. Low complexity-rich tracts occupy residues 566-586 and 595-655; these read TTIG…GSVP and TPSP…TSPT. Disordered stretches follow at residues 566 to 771 and 856 to 887; these read TTIG…QHSE and FLND…LDSS. Residues 656–665 are compositionally biased toward polar residues; the sequence is QEAKMSTHTT. Residues 673 to 688 are compositionally biased toward low complexity; the sequence is TTTSPISTTESPSPST. 2 stretches are compositionally biased toward polar residues: residues 693 to 703 and 725 to 741; these read ISSSSAESTGP and ASCT…SKPL. Phosphoserine is present on serine 748. Positions 748-767 are enriched in low complexity; it reads SPEQIPKSPSSSPSSSAPEP. Over residues 858-867 the composition is skewed to acidic residues; sequence NDDEDEDNDG. Residues 868–885 show a composition bias toward basic and acidic residues; that stretch reads PGDRHTSSPEVVAEDRLD. Phosphoserine occurs at positions 874 and 875.

It belongs to the RIPOR family. Interacts (via N-terminus) with RHOA (GTP-bound form); this interaction links active RHOA to STK24 and STK26 kinases. Interacts with RHOB. Interacts with RHOC. Interacts (via C-terminus) with PDCD10; this interaction occurs in a Rho-independent manner. Interacts (via C-terminus) with STK24; this interaction occurs in a PDCD10-dependent and Rho-independent manner. Interacts (via C-terminus) with STK26; this interaction occurs in a PDCD10-dependent and Rho-independent manner. Interacts (via N-terminus) with 14-3-3 proteins; these interactions occur in a Rho-dependent manner. As to expression, expressed in the kidney exclusively by glomerular podocytes.

The protein localises to the cytoplasm. It localises to the golgi apparatus. Functionally, downstream effector protein for Rho-type small GTPases that plays a role in cell polarity and directional migration. Acts as an adapter protein, linking active Rho proteins to STK24 and STK26 kinases, and hence positively regulates Golgi reorientation in polarized cell migration upon Rho activation. Involved in the subcellular relocation of STK26 from the Golgi to cytoplasm punctae in a Rho- and PDCD10-dependent manner upon serum stimulation. The protein is Rho family-interacting cell polarization regulator 1 of Mus musculus (Mouse).